The sequence spans 186 residues: Ribosome-recycling factor (186 aa).

Belongs to the RRF family.

The protein localises to the cytoplasm. In terms of biological role, responsible for the release of ribosomes from messenger RNA at the termination of protein biosynthesis. May increase the efficiency of translation by recycling ribosomes from one round of translation to another. In Rickettsia africae (strain ESF-5), this protein is Ribosome-recycling factor.